The sequence spans 428 residues: ETS domain-containing protein Elk-1 (428 aa).

The ETS DNA-binding region spans 5–86 (VTLWQFLLQL…SGQKFVYKFV (82 aa)). Disordered regions lie at residues 121-149 (AAPGDTVSGKPGTPKGAGMAGPGGLARSS), 165-205 (QSLQ…SPLE), and 228-358 (NLKS…SLLP). Residues 177–205 (PAVVLPSAAPAGAAAPPSGSRSTSPSPLE) are compositionally biased toward low complexity. Residues Lys230, Lys249, and Lys254 each participate in a glycyl lysine isopeptide (Lys-Gly) (interchain with G-Cter in SUMO) cross-link. Over residues 248–261 (VKVEGPKEELEVAG) the composition is skewed to basic and acidic residues. At Ser324 the chain carries Phosphoserine; by MAPK1. Residues Thr336, Thr353, Thr363, and Thr368 each carry the phosphothreonine; by MAPK1 modification. The sufficient for interaction with MAD2L2 stretch occupies residues 349–399 (GPALTPSLLPTHTLTPVLLTPSSLPPSIHFWSTLSPIAPRSPAKLSFQFPS). Thr381 carries an O-linked (GlcNAc) threonine glycan. Ser383 carries the phosphoserine; by MAPK1 and MAPK8 modification. Position 389 is a phosphoserine; by MAPK1 (Ser389). Residue Thr417 is modified to Phosphothreonine; by MAPK1. Ser422 bears the Phosphoserine; by MAPK1 mark.

The protein belongs to the ETS family. As to quaternary structure, interacts in its sumoylated form with PIAS2/PIASX which enhances its transcriptional activator activity. Interacts with MAD2L2; the interaction is direct and promotes phosphorylation by the kinases MAPK8 and/or MAPK9. Interacts with POU1F1. Sumoylation represses transcriptional activator activity as it results in recruitment of HDAC2 to target gene promoters which leads to decreased histone acetylation and reduced transactivator activity. It also regulates nuclear retention. In terms of processing, on mitogenic stimulation, phosphorylated on C-terminal serine and threonine residues by MAPK1. Ser-383 and Ser-389 are the preferred sites for MAPK1. In vitro, phosphorylation by MAPK1 potentiates ternary complex formation with the serum responses factors, SRE and SRF. Also phosphorylated on Ser-383 by MAPK8 and/or MAKP9. Phosphorylation leads to loss of sumoylation and restores transcriptional activator activity. Phosphorylated and activated by CAMK4, MAPK11, MAPK12 and MAPK14. Upon bFGF stimulus, phosphorylated by PAK1. Phosphorylated by PRP4K at Thr-417; phosphorylation activation ELK1 transcriptional activity. In terms of tissue distribution, lung and testis.

It is found in the nucleus. Functionally, transcription factor that binds to purine-rich DNA sequences. Forms a ternary complex with SRF and the ETS and SRF motifs of the serum response element (SRE) on the promoter region of immediate early genes such as FOS and IER2. Induces target gene transcription upon JNK and MAPK-signaling pathways stimulation. This Homo sapiens (Human) protein is ETS domain-containing protein Elk-1.